Reading from the N-terminus, the 448-residue chain is ATP-dependent protease ATPase subunit HslU (448 aa).

Residues Ile18, 60–65 (GVGKTE), Asp261, Glu326, and Arg398 each bind ATP.

Belongs to the ClpX chaperone family. HslU subfamily. In terms of assembly, a double ring-shaped homohexamer of HslV is capped on each side by a ring-shaped HslU homohexamer. The assembly of the HslU/HslV complex is dependent on binding of ATP.

It is found in the cytoplasm. In terms of biological role, ATPase subunit of a proteasome-like degradation complex; this subunit has chaperone activity. The binding of ATP and its subsequent hydrolysis by HslU are essential for unfolding of protein substrates subsequently hydrolyzed by HslV. HslU recognizes the N-terminal part of its protein substrates and unfolds these before they are guided to HslV for hydrolysis. This is ATP-dependent protease ATPase subunit HslU from Paraburkholderia phytofirmans (strain DSM 17436 / LMG 22146 / PsJN) (Burkholderia phytofirmans).